The following is a 287-amino-acid chain: MSYNVRVAIIGGTGLYSLEGMELIEEIFPDTPWGKPSDKIKIGKYKGKLIAFLPRHGIGHFLSPPEVPNHANICALKQLGVEEIVAFSSVGSLREEIKPLDFVLPSQIIDRTRFRNSTYFGNGVVAHAPFAEPFSPNLSKRIAQTAKKIGLEIHLDKTLVCMEGPLFSTKAESHLYRSWGADIINMTVLPEAKLAREAEIAYQMICMSTDYDCWREGEESVTVEMVIANLTKNAETAKKLLSELIHVLGNGDDLSLKNSTRYSIITAPEKRNPETVKKLRVLFPEYF.

Phosphate is bound by residues T13 and 55-56; that span reads RH. A substrate-binding site is contributed by M186. T187 lines the phosphate pocket. 210–212 lines the substrate pocket; sequence DYD.

Belongs to the PNP/MTAP phosphorylase family. MTAP subfamily. In terms of assembly, homohexamer. Dimer of a homotrimer.

It carries out the reaction S-methyl-5'-thioadenosine + phosphate = 5-(methylsulfanyl)-alpha-D-ribose 1-phosphate + adenine. The protein operates within amino-acid biosynthesis; L-methionine biosynthesis via salvage pathway; S-methyl-5-thio-alpha-D-ribose 1-phosphate from S-methyl-5'-thioadenosine (phosphorylase route): step 1/1. Functionally, catalyzes the reversible phosphorylation of S-methyl-5'-thioadenosine (MTA) to adenine and 5-methylthioribose-1-phosphate. Involved in the breakdown of MTA, a major by-product of polyamine biosynthesis. Responsible for the first step in the methionine salvage pathway after MTA has been generated from S-adenosylmethionine. Has broad substrate specificity with 6-aminopurine nucleosides as preferred substrates. The protein is S-methyl-5'-thioadenosine phosphorylase of Leptospira interrogans serogroup Icterohaemorrhagiae serovar copenhageni (strain Fiocruz L1-130).